A 148-amino-acid polypeptide reads, in one-letter code: Lipoprotein signal peptidase (148 aa).

Transmembrane regions (helical) follow at residues valine 57–tyrosine 77 and valine 88–tyrosine 105. Active-site residues include aspartate 110 and aspartate 129. Residues threonine 124 to leucine 144 traverse the membrane as a helical segment.

It belongs to the peptidase A8 family.

Its subcellular location is the cell membrane. The enzyme catalyses Release of signal peptides from bacterial membrane prolipoproteins. Hydrolyzes -Xaa-Yaa-Zaa-|-(S,diacylglyceryl)Cys-, in which Xaa is hydrophobic (preferably Leu), and Yaa (Ala or Ser) and Zaa (Gly or Ala) have small, neutral side chains.. The protein operates within protein modification; lipoprotein biosynthesis (signal peptide cleavage). Its function is as follows. This protein specifically catalyzes the removal of signal peptides from prolipoproteins. The chain is Lipoprotein signal peptidase from Clostridium novyi (strain NT).